The chain runs to 221 residues: Factor arrest protein 7 (221 aa).

Component of a complex at least composed of FAR3, FAR7, FAR8, FAR10, FAR11 and VPS64.

Functionally, participates in the control of the reentry into the cell cycle following pheromone treatment. This is Factor arrest protein 7 (FAR7) from Saccharomyces cerevisiae (strain ATCC 204508 / S288c) (Baker's yeast).